Reading from the N-terminus, the 208-residue chain is Uracil phosphoribosyltransferase (208 aa).

5-phospho-alpha-D-ribose 1-diphosphate is bound by residues arginine 78, arginine 103, and 130 to 138 (DPMLATGGS). Uracil is bound by residues isoleucine 193 and 198 to 200 (GDA). Aspartate 199 lines the 5-phospho-alpha-D-ribose 1-diphosphate pocket.

This sequence belongs to the UPRTase family. Mg(2+) serves as cofactor.

The catalysed reaction is UMP + diphosphate = 5-phospho-alpha-D-ribose 1-diphosphate + uracil. The protein operates within pyrimidine metabolism; UMP biosynthesis via salvage pathway; UMP from uracil: step 1/1. With respect to regulation, allosterically activated by GTP. Functionally, catalyzes the conversion of uracil and 5-phospho-alpha-D-ribose 1-diphosphate (PRPP) to UMP and diphosphate. The chain is Uracil phosphoribosyltransferase from Shewanella sediminis (strain HAW-EB3).